A 339-amino-acid chain; its full sequence is 1-aminocyclopropane-1-carboxylate deaminase (339 aa).

Residue Lys52 is modified to N6-(pyridoxal phosphate)lysine. Ser79 acts as the Nucleophile in catalysis.

This sequence belongs to the ACC deaminase/D-cysteine desulfhydrase family. Homotrimer. Requires pyridoxal 5'-phosphate as cofactor.

It catalyses the reaction 1-aminocyclopropane-1-carboxylate + H2O = 2-oxobutanoate + NH4(+). Catalyzes a cyclopropane ring-opening reaction, the irreversible conversion of 1-aminocyclopropane-1-carboxylate (ACC) to ammonia and alpha-ketobutyrate. Allows growth on ACC as a nitrogen source. The chain is 1-aminocyclopropane-1-carboxylate deaminase from Bradyrhizobium sp. (strain ORS 278).